A 779-amino-acid polypeptide reads, in one-letter code: Phosphoribosylformylglycinamidine synthase subunit PurL (779 aa).

Residue histidine 52 is part of the active site. Residues tyrosine 55 and lysine 94 each coordinate ATP. Glutamate 96 is a binding site for Mg(2+). Residues 97–100 and arginine 119 each bind substrate; that span reads SHNH. The Proton acceptor role is filled by histidine 98. Mg(2+) is bound at residue aspartate 120. Glutamine 243 serves as a coordination point for substrate. Mg(2+) is bound at residue aspartate 271. 315–317 provides a ligand contact to substrate; it reads ESQ. 2 residues coordinate ATP: asparagine 523 and glycine 560. Asparagine 561 is a Mg(2+) binding site. Residue serine 563 coordinates substrate.

The protein belongs to the FGAMS family. Monomer. Part of the FGAM synthase complex composed of 1 PurL, 1 PurQ and 2 PurS subunits.

It is found in the cytoplasm. It catalyses the reaction N(2)-formyl-N(1)-(5-phospho-beta-D-ribosyl)glycinamide + L-glutamine + ATP + H2O = 2-formamido-N(1)-(5-O-phospho-beta-D-ribosyl)acetamidine + L-glutamate + ADP + phosphate + H(+). Its pathway is purine metabolism; IMP biosynthesis via de novo pathway; 5-amino-1-(5-phospho-D-ribosyl)imidazole from N(2)-formyl-N(1)-(5-phospho-D-ribosyl)glycinamide: step 1/2. Functionally, part of the phosphoribosylformylglycinamidine synthase complex involved in the purines biosynthetic pathway. Catalyzes the ATP-dependent conversion of formylglycinamide ribonucleotide (FGAR) and glutamine to yield formylglycinamidine ribonucleotide (FGAM) and glutamate. The FGAM synthase complex is composed of three subunits. PurQ produces an ammonia molecule by converting glutamine to glutamate. PurL transfers the ammonia molecule to FGAR to form FGAM in an ATP-dependent manner. PurS interacts with PurQ and PurL and is thought to assist in the transfer of the ammonia molecule from PurQ to PurL. This is Phosphoribosylformylglycinamidine synthase subunit PurL from Prochlorococcus marinus (strain MIT 9301).